The chain runs to 893 residues: Desmocollin-1 (893 aa).

The N-terminal stretch at Met-1–Ala-29 is a signal peptide. Residues Cys-30 to Arg-132 constitute a propeptide that is removed on maturation. Cadherin domains lie at Arg-133–Phe-240, Glu-241–Phe-352, Thr-353–Cys-470, Gln-471–Pro-574, and Gln-575–Glu-682. Over Arg-133–Lys-692 the chain is Extracellular. A glycan (N-linked (GlcNAc...) asparagine) is linked at Asn-163. Thr-383 is subject to Phosphothreonine. 2 N-linked (GlcNAc...) asparagine glycosylation sites follow: Asn-398 and Asn-545. A helical transmembrane segment spans residues Trp-693–Val-715. The Cytoplasmic segment spans residues Thr-716–Lys-893.

As to quaternary structure, binds to JUP/plakoglobin. Isoform 1A is phosphorylated on a serine but isoform 1B is not. In terms of tissue distribution, epidermis and weakly in tongue papillae.

The protein localises to the cell membrane. It is found in the cell junction. The protein resides in the desmosome. In terms of biological role, a component of desmosome cell-cell junctions which are required for positive regulation of cellular adhesion. Required for desmosome adhesion strength between the granular layers of the epidermis, as a result moderates epidermal proliferation and differentiation. Is therefore required to maintain postnatal epidermal barrier function and normal hair follicle morphology into adulthood. The chain is Desmocollin-1 (DSC1) from Bos taurus (Bovine).